Reading from the N-terminus, the 444-residue chain is tRNA modification GTPase MnmE (444 aa).

The (6S)-5-formyl-5,6,7,8-tetrahydrofolate site is built by Arg-23, Glu-82, and Lys-121. The TrmE-type G domain maps to 216 to 365 (GTSIVLAGLP…LKQALQKWLN (150 aa)). Asn-226 contacts K(+). Residues 226–231 (NAGKSS), 245–251 (TDIPGTT), and 270–273 (DSAG) contribute to the GTP site. Ser-230 is a binding site for Mg(2+). K(+) contacts are provided by Thr-245, Ile-247, and Thr-250. Mg(2+) is bound at residue Thr-251. Lys-444 is a binding site for (6S)-5-formyl-5,6,7,8-tetrahydrofolate.

Belongs to the TRAFAC class TrmE-Era-EngA-EngB-Septin-like GTPase superfamily. TrmE GTPase family. As to quaternary structure, homodimer. Heterotetramer of two MnmE and two MnmG subunits. The cofactor is K(+).

The protein localises to the cytoplasm. Its function is as follows. Exhibits a very high intrinsic GTPase hydrolysis rate. Involved in the addition of a carboxymethylaminomethyl (cmnm) group at the wobble position (U34) of certain tRNAs, forming tRNA-cmnm(5)s(2)U34. This Chlamydia trachomatis serovar L2 (strain ATCC VR-902B / DSM 19102 / 434/Bu) protein is tRNA modification GTPase MnmE.